We begin with the raw amino-acid sequence, 251 residues long: Hydroxyacylglutathione hydrolase (251 aa).

Zn(2+) contacts are provided by H53, H55, D57, H58, H110, D127, and H165.

It belongs to the metallo-beta-lactamase superfamily. Glyoxalase II family. As to quaternary structure, monomer. Zn(2+) is required as a cofactor.

It catalyses the reaction an S-(2-hydroxyacyl)glutathione + H2O = a 2-hydroxy carboxylate + glutathione + H(+). The protein operates within secondary metabolite metabolism; methylglyoxal degradation; (R)-lactate from methylglyoxal: step 2/2. Its function is as follows. Thiolesterase that catalyzes the hydrolysis of S-D-lactoyl-glutathione to form glutathione and D-lactic acid. In Yersinia pestis (strain Pestoides F), this protein is Hydroxyacylglutathione hydrolase.